Here is a 606-residue protein sequence, read N- to C-terminus: Proline--tRNA ligase (606 aa).

The protein belongs to the class-II aminoacyl-tRNA synthetase family. ProS type 1 subfamily. In terms of assembly, homodimer.

The protein localises to the cytoplasm. The enzyme catalyses tRNA(Pro) + L-proline + ATP = L-prolyl-tRNA(Pro) + AMP + diphosphate. Its function is as follows. Catalyzes the attachment of proline to tRNA(Pro) in a two-step reaction: proline is first activated by ATP to form Pro-AMP and then transferred to the acceptor end of tRNA(Pro). As ProRS can inadvertently accommodate and process non-cognate amino acids such as alanine and cysteine, to avoid such errors it has two additional distinct editing activities against alanine. One activity is designated as 'pretransfer' editing and involves the tRNA(Pro)-independent hydrolysis of activated Ala-AMP. The other activity is designated 'posttransfer' editing and involves deacylation of mischarged Ala-tRNA(Pro). The misacylated Cys-tRNA(Pro) is not edited by ProRS. This chain is Proline--tRNA ligase, found in Kocuria rhizophila (strain ATCC 9341 / DSM 348 / NBRC 103217 / DC2201).